We begin with the raw amino-acid sequence, 173 residues long: Photosystem I assembly protein Ycf3 (173 aa).

TPR repeat units follow at residues 35–68 (AYIY…EENK), 72–105 (GETL…NPKQ), and 120–153 (GRFA…YPGG).

It belongs to the Ycf3 family.

It is found in the cellular thylakoid membrane. Functionally, essential for the assembly of the photosystem I (PSI) complex. May act as a chaperone-like factor to guide the assembly of the PSI subunits. In Prochlorococcus marinus subsp. pastoris (strain CCMP1986 / NIES-2087 / MED4), this protein is Photosystem I assembly protein Ycf3.